The following is a 96-amino-acid chain: Co-chaperonin GroES (96 aa).

The protein belongs to the GroES chaperonin family. Heptamer of 7 subunits arranged in a ring. Interacts with the chaperonin GroEL.

It is found in the cytoplasm. Its function is as follows. Together with the chaperonin GroEL, plays an essential role in assisting protein folding. The GroEL-GroES system forms a nano-cage that allows encapsulation of the non-native substrate proteins and provides a physical environment optimized to promote and accelerate protein folding. GroES binds to the apical surface of the GroEL ring, thereby capping the opening of the GroEL channel. This Halorhodospira halophila (strain DSM 244 / SL1) (Ectothiorhodospira halophila (strain DSM 244 / SL1)) protein is Co-chaperonin GroES.